Reading from the N-terminus, the 621-residue chain is 1-deoxy-D-xylulose-5-phosphate synthase (621 aa).

Residues histidine 80 and 121–123 (GHS) each bind thiamine diphosphate. Residue aspartate 152 coordinates Mg(2+). Residues 153-154 (GA), asparagine 181, tyrosine 288, and glutamate 370 contribute to the thiamine diphosphate site. Asparagine 181 is a binding site for Mg(2+).

Belongs to the transketolase family. DXPS subfamily. As to quaternary structure, homodimer. Requires Mg(2+) as cofactor. Thiamine diphosphate serves as cofactor.

It carries out the reaction D-glyceraldehyde 3-phosphate + pyruvate + H(+) = 1-deoxy-D-xylulose 5-phosphate + CO2. It functions in the pathway metabolic intermediate biosynthesis; 1-deoxy-D-xylulose 5-phosphate biosynthesis; 1-deoxy-D-xylulose 5-phosphate from D-glyceraldehyde 3-phosphate and pyruvate: step 1/1. In terms of biological role, catalyzes the acyloin condensation reaction between C atoms 2 and 3 of pyruvate and glyceraldehyde 3-phosphate to yield 1-deoxy-D-xylulose-5-phosphate (DXP). The chain is 1-deoxy-D-xylulose-5-phosphate synthase from Pseudoalteromonas atlantica (strain T6c / ATCC BAA-1087).